We begin with the raw amino-acid sequence, 200 residues long: Pyrrolidone-carboxylate peptidase (200 aa).

Active-site residues include E78, C141, and H165.

This sequence belongs to the peptidase C15 family. As to quaternary structure, homotetramer.

Its subcellular location is the cytoplasm. It catalyses the reaction Release of an N-terminal pyroglutamyl group from a polypeptide, the second amino acid generally not being Pro.. Functionally, removes 5-oxoproline from various penultimate amino acid residues except L-proline. This chain is Pyrrolidone-carboxylate peptidase, found in Thermococcus onnurineus (strain NA1).